Here is a 469-residue protein sequence, read N- to C-terminus: Spermatogenesis-associated protein 21 (469 aa).

2 disordered regions span residues 1–76 and 99–157; these read MDNR…AGTQ and HRRA…MGAP. Residues 49-61 are compositionally biased toward basic and acidic residues; the sequence is EVRDIGERREPDR. A compositionally biased stretch (low complexity) spans 62-73; that stretch reads AQQQPQKPAVAA. Over residues 105-132 the composition is skewed to polar residues; it reads ARSQTAQKSPRTLTPVPTSAPSLPQTPA. Positions 146–157 are enriched in pro residues; sequence APGPEPAPMGAP. Residues 198–225 are a coiled coil; sequence EPEEQSLQKLYQNREKSEEQLTLKQEEA. Residues 255-290 enclose the EF-hand domain; it reads VTLAQVEDALMSADVNGDGRVDFKDFLAVMTDTRRF. Residues D268, N270, D272, R274, and D279 each contribute to the Ca(2+) site. Residues 424–469 are disordered; that stretch reads YALDQCTPPGLDPDIRSPFFQSGSQGNREHNSDSRKWLSSVPARTH. A compositionally biased stretch (basic and acidic residues) spans 450–459; it reads NREHNSDSRK.

Functionally, involved in the differentiation of haploid spermatids. This is Spermatogenesis-associated protein 21 (SPATA21) from Homo sapiens (Human).